Reading from the N-terminus, the 335-residue chain is Transaldolase (335 aa).

Residue lysine 135 is the Schiff-base intermediate with substrate of the active site.

This sequence belongs to the transaldolase family. Type 1 subfamily. As to quaternary structure, homodimer.

The protein localises to the cytoplasm. It carries out the reaction D-sedoheptulose 7-phosphate + D-glyceraldehyde 3-phosphate = D-erythrose 4-phosphate + beta-D-fructose 6-phosphate. It participates in carbohydrate degradation; pentose phosphate pathway; D-glyceraldehyde 3-phosphate and beta-D-fructose 6-phosphate from D-ribose 5-phosphate and D-xylulose 5-phosphate (non-oxidative stage): step 2/3. Functionally, transaldolase is important for the balance of metabolites in the pentose-phosphate pathway. The sequence is that of Transaldolase from Prochlorococcus marinus (strain SARG / CCMP1375 / SS120).